We begin with the raw amino-acid sequence, 408 residues long: COP9 signalosome complex subunit 4 (408 aa).

The PCI domain maps to 194–374; sequence RIQDARRRFL…GIIYFESNTT (181 aa).

This sequence belongs to the CSN4 family. As to quaternary structure, component of the COP9 signalosome (CSN) complex.

It is found in the cytoplasm. The protein localises to the nucleus. In terms of biological role, component of the COP9 signalosome (CSN) complex that acts as an regulator of the ubiquitin (Ubl) conjugation pathway by mediating the deneddylation of the cullin subunit of SCF-type E3 ubiquitin-protein ligase complexes. The CSN complex seems to link protein degradation to sexual development. Required for fruit body formation. The sequence is that of COP9 signalosome complex subunit 4 (csnD) from Emericella nidulans (strain FGSC A4 / ATCC 38163 / CBS 112.46 / NRRL 194 / M139) (Aspergillus nidulans).